A 532-amino-acid chain; its full sequence is Phosphoenolpyruvate carboxykinase (ATP) (532 aa).

Arg60, Tyr200, and Lys206 together coordinate substrate. ATP-binding positions include Lys206, His225, and 242-250 (GLSGTGKTT). Mn(2+)-binding residues include Lys206 and His225. A substrate-binding site is contributed by Ser244. Residue Asp263 coordinates Mn(2+). ATP is bound by residues Glu291, Arg327, 443–444 (RI), and Thr449. Position 327 (Arg327) interacts with substrate.

It belongs to the phosphoenolpyruvate carboxykinase (ATP) family. As to quaternary structure, monomer. Mn(2+) serves as cofactor.

It localises to the cytoplasm. The catalysed reaction is oxaloacetate + ATP = phosphoenolpyruvate + ADP + CO2. It participates in carbohydrate biosynthesis; gluconeogenesis. Inhibited by p-chloromercuribenzoate. Functionally, involved in gluconeogenesis. Catalyzes the conversion of oxaloacetate (OAA) to phosphoenolpyruvate (PEP) through direct phosphoryl transfer between the nucleoside triphosphate and OAA. The chain is Phosphoenolpyruvate carboxykinase (ATP) from Anaerobiospirillum succiniciproducens.